The following is a 91-amino-acid chain: ATP synthase subunit c (91 aa).

A run of 2 helical transmembrane segments spans residues 4 to 24 (FTMCMLAAGFGMAIGAFGTGI) and 53 to 73 (IGLAMIESLAIYVLVVCLIIL).

The protein belongs to the ATPase C chain family. As to quaternary structure, F-type ATPases have 2 components, F(1) - the catalytic core - and F(0) - the membrane proton channel. F(1) has five subunits: alpha(3), beta(3), gamma(1), delta(1), epsilon(1). F(0) has three main subunits: a(1), b(2) and c(10-14). The alpha and beta chains form an alternating ring which encloses part of the gamma chain. F(1) is attached to F(0) by a central stalk formed by the gamma and epsilon chains, while a peripheral stalk is formed by the delta and b chains.

Its subcellular location is the cell inner membrane. In terms of biological role, f(1)F(0) ATP synthase produces ATP from ADP in the presence of a proton or sodium gradient. F-type ATPases consist of two structural domains, F(1) containing the extramembraneous catalytic core and F(0) containing the membrane proton channel, linked together by a central stalk and a peripheral stalk. During catalysis, ATP synthesis in the catalytic domain of F(1) is coupled via a rotary mechanism of the central stalk subunits to proton translocation. Functionally, key component of the F(0) channel; it plays a direct role in translocation across the membrane. A homomeric c-ring of between 10-14 subunits forms the central stalk rotor element with the F(1) delta and epsilon subunits. This Geobacter sulfurreducens (strain ATCC 51573 / DSM 12127 / PCA) protein is ATP synthase subunit c.